Here is a 100-residue protein sequence, read N- to C-terminus: Aspartyl/glutamyl-tRNA(Asn/Gln) amidotransferase subunit C (100 aa).

It belongs to the GatC family. In terms of assembly, heterotrimer of A, B and C subunits.

The enzyme catalyses L-glutamyl-tRNA(Gln) + L-glutamine + ATP + H2O = L-glutaminyl-tRNA(Gln) + L-glutamate + ADP + phosphate + H(+). It catalyses the reaction L-aspartyl-tRNA(Asn) + L-glutamine + ATP + H2O = L-asparaginyl-tRNA(Asn) + L-glutamate + ADP + phosphate + 2 H(+). Its function is as follows. Allows the formation of correctly charged Asn-tRNA(Asn) or Gln-tRNA(Gln) through the transamidation of misacylated Asp-tRNA(Asn) or Glu-tRNA(Gln) in organisms which lack either or both of asparaginyl-tRNA or glutaminyl-tRNA synthetases. The reaction takes place in the presence of glutamine and ATP through an activated phospho-Asp-tRNA(Asn) or phospho-Glu-tRNA(Gln). The sequence is that of Aspartyl/glutamyl-tRNA(Asn/Gln) amidotransferase subunit C from Rickettsia typhi (strain ATCC VR-144 / Wilmington).